A 119-amino-acid chain; its full sequence is uncharacterized protein (119 aa).

The helical transmembrane segment at 30 to 50 (LMTLPCVLFLSSFGQAVIVVL) threads the bilayer.

Its subcellular location is the membrane. This is an uncharacterized protein from Saccharomyces cerevisiae (strain ATCC 204508 / S288c) (Baker's yeast).